The chain runs to 686 residues: Epsin (686 aa).

The ENTH domain maps to 14-145; that stretch reads DAVLNTPEIE…QDDQRIKEER (132 aa). Disordered stretches follow at residues 177-417 and 463-571; these read YDSD…FNNN and NSSM…TMRP. A compositionally biased stretch (polar residues) spans 185–211; the sequence is NQRDSYGGNQRDSYGGNQRDSYGGNQR. The span at 212-225 shows a compositional bias: basic and acidic residues; that stretch reads ETTRRDSFNGRDEG. Polar residues predominate over residues 237–256; the sequence is SYDSDPYSNTRAEYENYSNR. Composition is skewed to low complexity over residues 269-340 and 383-417; these read SNNS…SGPS and NNTN…FNNN. Residues 491-503 show a composition bias toward polar residues; it reads FDQQSGDFSNKND. Positions 504-521 are enriched in basic and acidic residues; it reads GQQKPKDTNDPWSKKDLF. Residues 527–547 show a composition bias toward low complexity; that stretch reads GNQNPNQSPVNNTNNNNNGNT. Polar residues predominate over residues 558 to 567; it reads PITSAGSTIP.

Belongs to the epsin family.

The protein localises to the membrane. It is found in the clathrin-coated pit. Functionally, binds to membranes enriched in phosphatidylinositol 4,5-bisphosphate (PtdIns(4,5)P2). This is Epsin (epnA) from Dictyostelium discoideum (Social amoeba).